The primary structure comprises 597 residues: Probable translation initiation factor IF-2 (597 aa).

Positions Ile4–Leu221 constitute a tr-type G domain. The tract at residues Gly13–Thr20 is G1. Gly13–Thr20 provides a ligand contact to GTP. The interval Gly38–His42 is G2. Residues Asp77 to Gly80 are G3. Residues Asp77–His81 and Asn131–Asp134 each bind GTP. The tract at residues Asn131–Asp134 is G4. Residues Ser199–Lys201 are G5.

Belongs to the TRAFAC class translation factor GTPase superfamily. Classic translation factor GTPase family. IF-2 subfamily.

Functionally, function in general translation initiation by promoting the binding of the formylmethionine-tRNA to ribosomes. Seems to function along with eIF-2. This Thermococcus sibiricus (strain DSM 12597 / MM 739) protein is Probable translation initiation factor IF-2.